A 236-amino-acid chain; its full sequence is Protein Thf1 (236 aa).

A coiled-coil region spans residues 180-220 (PVEKMQKDLEQYRSNLEKMTQARKTLEDIVAAERKRRQQNA). The interval 206 to 236 (EDIVAAERKRRQQNAAPDRSPESASATEAPN) is disordered. Polar residues predominate over residues 227–236 (ESASATEAPN).

It belongs to the THF1 family.

Its function is as follows. May be involved in photosynthetic membrane biogenesis. The polypeptide is Protein Thf1 (Cyanothece sp. (strain PCC 7425 / ATCC 29141)).